The chain runs to 144 residues: MARTKQSARKTTGGKAPRKQLSAKSARKGVSPASSAGAKKSRYRPGSVALKEIRRYQKSTDFLIRRLPFQRACRSVVKECSNATDIRFQGPALASIQEALEVYLVGLFEDAMLCAYHAKRVTVFPKDISLVLKLRSRHVKSISD.

Residues 1 to 45 form a disordered region; it reads MARTKQSARKTTGGKAPRKQLSAKSARKGVSPASSAGAKKSRYRP. At lysine 5 the chain carries N6,N6,N6-trimethyllysine; alternate. Residue lysine 5 is modified to N6,N6-dimethyllysine; alternate. An N6-methyllysine; alternate mark is found at lysine 5 and lysine 10. Lysine 10, lysine 15, lysine 19, lysine 24, lysine 28, and lysine 39 each carry N6-acetyllysine; alternate. Lysine 15 carries the post-translational modification N6,N6-dimethyllysine; alternate. N6-methyllysine; alternate occurs at positions 19, 24, 28, and 39. Residues lysine 28 and lysine 39 each carry the N6,N6,N6-trimethyllysine; alternate modification. Lysine 28 and lysine 39 each carry N6,N6-dimethyllysine; alternate. Lysine 58 carries the post-translational modification N6-acetyllysine.

The protein belongs to the histone H3 family. The nucleosome is a histone octamer containing two molecules each of H2A, H2B, H3 and H4 assembled in one H3-H4 heterotetramer and two H2A-H2B heterodimers. The octamer wraps approximately 147 bp of DNA. Post-translationally, mono-, di- and trimethylated to form H3K4me1/2/3. H3K4me activates gene expression by regulating transcription elongation and plays a role in telomere length maintenance. H3K4me enrichment correlates with transcription levels, and occurs in a 5' to 3' gradient with H3K4me3 enrichment at the 5'-end of genes, shifting to H3K4me2 and then H3K4me1. H3K36me represses gene expression. Acetylation of histone H3 leads to transcriptional activation.

It is found in the nucleus. It localises to the chromosome. Functionally, core component of nucleosome. Nucleosomes wrap and compact DNA into chromatin, limiting DNA accessibility to the cellular machineries which require DNA as a template. Histones thereby play a central role in transcription regulation, DNA repair, DNA replication and chromosomal stability. DNA accessibility is regulated via a complex set of post-translational modifications of histones, also called histone code, and nucleosome remodeling. The protein is Histone H3.1 (HHT1) of Encephalitozoon cuniculi (strain GB-M1) (Microsporidian parasite).